Reading from the N-terminus, the 911-residue chain is Zinc finger protein 721 (911 aa).

The C2H2-type 1; degenerate zinc finger occupies 69 to 91 (FQCNARVKVFSKFANSNKDKTRH). The C2H2-type 2 zinc-finger motif lies at 97 to 119 (FKCNECGKSFQKFSDLTQHKGIH). The segment at 125 to 147 (YTCEERGKDFGWYTDLNQHKKIH) adopts a C2H2-type 3; degenerate zinc-finger fold. The segment at 153–175 (YKCEECGKAFNRSTNLTAHKRIH) adopts a C2H2-type 4 zinc-finger fold. A C2H2-type 5; degenerate zinc finger spans residues 181–203 (YTGEDRDRAFGWSTNLNEYKKIH). 7 C2H2-type zinc fingers span residues 209–231 (YKCK…EKIH), 237–259 (YKCK…KRIH), 265–287 (FKCL…RRIH), 293–315 (YTCE…RRIH), 321–343 (YTCG…RRIH), 349–371 (YKCE…KKIH), and 377–399 (YKCE…KRIH). The segment at 405-427 (YTCEDRGRAFGLSTNLNEYKKIH) adopts a C2H2-type 13; degenerate zinc-finger fold. 6 consecutive C2H2-type zinc fingers follow at residues 433–455 (YKCK…EKIH), 461–483 (YKCK…KRIH), 489–511 (FECL…RRIH), 517–539 (YTCE…RRIH), 545–567 (YTCE…RRIH), and 573–595 (YKCE…KKIH). A Glycyl lysine isopeptide (Lys-Gly) (interchain with G-Cter in SUMO2) cross-link involves residue K478. Residues 601–623 (YKCEECGKDFVWYTDLNQQKKIY) form a C2H2-type 20; degenerate zinc finger. The C2H2-type 21; degenerate zinc-finger motif lies at 629-651 (YKCEECGKAFAPSTDLNQHTKIL). Residue K649 forms a Glycyl lysine isopeptide (Lys-Gly) (interchain with G-Cter in SUMO2) linkage. C2H2-type zinc fingers lie at residues 657–679 (YKCE…KKIH) and 685–707 (YKCE…RRVH). The segment at 713–735 (YKCEDRGRSFGWSTNLNEYKKIH) adopts a C2H2-type 24; degenerate zinc-finger fold. 6 consecutive C2H2-type zinc fingers follow at residues 741 to 763 (YKCK…EKIH), 769 to 791 (YKCK…KRIH), 797 to 819 (FKCL…RRIH), 825 to 847 (YTCE…RRIH), 853 to 875 (YTCG…KKIH), and 881 to 903 (YTCG…KKIH). Residue K786 forms a Glycyl lysine isopeptide (Lys-Gly) (interchain with G-Cter in SUMO2) linkage.

This sequence belongs to the krueppel C2H2-type zinc-finger protein family.

The protein resides in the nucleus. In terms of biological role, may be involved in transcriptional regulation. This Homo sapiens (Human) protein is Zinc finger protein 721 (ZNF721).